A 782-amino-acid chain; its full sequence is Endonuclease MutS2 (782 aa).

Residue 336-343 (GPNTGGKT) coordinates ATP. Residues 707 to 782 (LDLRGYRYED…GFGVTVATLK (76 aa)) form the Smr domain.

This sequence belongs to the DNA mismatch repair MutS family. MutS2 subfamily. As to quaternary structure, homodimer. Binds to stalled ribosomes, contacting rRNA.

Functionally, endonuclease that is involved in the suppression of homologous recombination and thus may have a key role in the control of bacterial genetic diversity. Acts as a ribosome collision sensor, splitting the ribosome into its 2 subunits. Detects stalled/collided 70S ribosomes which it binds and splits by an ATP-hydrolysis driven conformational change. Acts upstream of the ribosome quality control system (RQC), a ribosome-associated complex that mediates the extraction of incompletely synthesized nascent chains from stalled ribosomes and their subsequent degradation. Probably generates substrates for RQC. The polypeptide is Endonuclease MutS2 (Staphylococcus aureus (strain MSSA476)).